Reading from the N-terminus, the 324-residue chain is Glycerol-3-phosphate dehydrogenase [NAD(P)+] (324 aa).

Residues F11, R31, and K107 each coordinate NADPH. Residues K107 and G135 each coordinate sn-glycerol 3-phosphate. A139 contributes to the NADPH binding site. K190, D245, S255, R256, and N257 together coordinate sn-glycerol 3-phosphate. K190 acts as the Proton acceptor in catalysis. Position 256 (R256) interacts with NADPH. NADPH is bound by residues V278 and E279.

It belongs to the NAD-dependent glycerol-3-phosphate dehydrogenase family.

It is found in the cytoplasm. The catalysed reaction is sn-glycerol 3-phosphate + NAD(+) = dihydroxyacetone phosphate + NADH + H(+). The enzyme catalyses sn-glycerol 3-phosphate + NADP(+) = dihydroxyacetone phosphate + NADPH + H(+). It functions in the pathway membrane lipid metabolism; glycerophospholipid metabolism. Functionally, catalyzes the reduction of the glycolytic intermediate dihydroxyacetone phosphate (DHAP) to sn-glycerol 3-phosphate (G3P), the key precursor for phospholipid synthesis. In Anaplasma phagocytophilum (strain HZ), this protein is Glycerol-3-phosphate dehydrogenase [NAD(P)+].